The sequence spans 158 residues: NAD(P)H-quinone oxidoreductase subunit N (158 aa).

The protein belongs to the complex I NdhN subunit family. As to quaternary structure, NDH-1 can be composed of about 15 different subunits; different subcomplexes with different compositions have been identified which probably have different functions.

Its subcellular location is the cellular thylakoid membrane. It carries out the reaction a plastoquinone + NADH + (n+1) H(+)(in) = a plastoquinol + NAD(+) + n H(+)(out). The enzyme catalyses a plastoquinone + NADPH + (n+1) H(+)(in) = a plastoquinol + NADP(+) + n H(+)(out). Functionally, NDH-1 shuttles electrons from an unknown electron donor, via FMN and iron-sulfur (Fe-S) centers, to quinones in the respiratory and/or the photosynthetic chain. The immediate electron acceptor for the enzyme in this species is believed to be plastoquinone. Couples the redox reaction to proton translocation, and thus conserves the redox energy in a proton gradient. Cyanobacterial NDH-1 also plays a role in inorganic carbon-concentration. In Microcystis aeruginosa (strain NIES-843 / IAM M-2473), this protein is NAD(P)H-quinone oxidoreductase subunit N.